A 463-amino-acid chain; its full sequence is Cysteine--tRNA ligase (463 aa).

Zn(2+) is bound at residue C29. A 'HIGH' region motif is present at residues 31–41; that stretch reads MTIYDLCHIGH. C218, H243, and E247 together coordinate Zn(2+). The 'KMSKS' region motif lies at 275–279; that stretch reads KMSKS. Residue K278 coordinates ATP.

This sequence belongs to the class-I aminoacyl-tRNA synthetase family. Monomer. The cofactor is Zn(2+).

The protein resides in the cytoplasm. The catalysed reaction is tRNA(Cys) + L-cysteine + ATP = L-cysteinyl-tRNA(Cys) + AMP + diphosphate. The chain is Cysteine--tRNA ligase from Polaromonas naphthalenivorans (strain CJ2).